The following is a 1398-amino-acid chain: MAP-homologous protein 1 (1398 aa).

Position 1 is an N-acetylmethionine (M1). The interval 21 to 77 is disordered; sequence GWLVRPSASTSKSSRPGKSESKANSVAPDIQMDTARPPVFETSVDSSSSILSSNDKG. The segment covering 27-36 has biased composition (polar residues); that stretch reads SASTSKSSRP. Residues 63-73 are compositionally biased toward low complexity; sequence SVDSSSSILSS. S81 carries the post-translational modification Phosphoserine. Disordered regions lie at residues 90–144, 156–186, and 191–210; these read NQRA…APAP, HRKK…GAAI, and TATI…PPSY. 2 stretches are compositionally biased toward polar residues: residues 91-102 and 114-123; these read QRANAGSTSVPT and VVETNLSNVE. Over residues 159 to 186 the composition is skewed to basic and acidic residues; that stretch reads KDQEQQEKERERKERSPSPTHVDRGAAI. K221 is covalently cross-linked (Glycyl lysine isopeptide (Lys-Gly) (interchain with G-Cter in ubiquitin)). Position 222 is a phosphothreonine (T222). 4 disordered regions span residues 244-270, 296-382, 395-428, and 515-548; these read HSPE…PDPR, SSAS…PSSH, GNNN…SSME, and NPEE…NNSQ. Residues S309, S311, S354, and S357 each carry the phosphoserine modification. Residues 357-371 are compositionally biased toward low complexity; the sequence is SIVDTVDSNSDVSSS. Polar residues predominate over residues 372-381; it reads AQNNNQTPSS. The segment covering 396–426 has biased composition (low complexity); sequence NNNNNSTNASSLSANVNNPDTSSTSLWSSSS. Residues 521–538 show a composition bias toward basic and acidic residues; the sequence is ANAKSKEEMAPQKQNEVE. Position 577 is a phosphothreonine (T577). A compositionally biased stretch (low complexity) spans 605–615; it reads STSSLASMVSS. Disordered regions lie at residues 605–630, 1148–1169, and 1203–1223; these read STSS…EILP, LKSP…PNSE, and DAED…HEDV. Residues 1160-1169 are compositionally biased toward polar residues; the sequence is GGNQAQPNSE. Residues 1208-1223 show a composition bias toward basic and acidic residues; it reads VEFREGDDSNVNHEDV. Residues 1227–1258 are tau/MAP repeat-like; it reads DQQFRDEVDIKNKYSIIKRELEHEKLVGGGDL. The tract at residues 1313–1372 is disordered; sequence QEETAFRTKDEQQSSQSNDSSANASPTTDPISTGSNTSRTNDNAHIPPTDAPGFDKFMNN. The segment covering 1325 to 1337 has biased composition (low complexity); that stretch reads QSSQSNDSSANAS. Polar residues predominate over residues 1338-1355; sequence PTTDPISTGSNTSRTNDN.

It localises to the cytoplasm. The protein resides in the cytoskeleton. It is found in the spindle. Functionally, essential for the formation and/or stabilization of microtubules. Binds to microtubules in vitro. In Saccharomyces cerevisiae (strain ATCC 204508 / S288c) (Baker's yeast), this protein is MAP-homologous protein 1 (MHP1).